The chain runs to 164 residues: ATP synthase subunit b (164 aa).

Residues 6-26 (GELVGNFILVTGSVIVLLLLI) form a helical membrane-spanning segment.

This sequence belongs to the ATPase B chain family. F-type ATPases have 2 components, F(1) - the catalytic core - and F(0) - the membrane proton channel. F(1) has five subunits: alpha(3), beta(3), gamma(1), delta(1), epsilon(1). F(0) has three main subunits: a(1), b(2) and c(10-14). The alpha and beta chains form an alternating ring which encloses part of the gamma chain. F(1) is attached to F(0) by a central stalk formed by the gamma and epsilon chains, while a peripheral stalk is formed by the delta and b chains.

The protein resides in the cell membrane. Its function is as follows. F(1)F(0) ATP synthase produces ATP from ADP in the presence of a proton or sodium gradient. F-type ATPases consist of two structural domains, F(1) containing the extramembraneous catalytic core and F(0) containing the membrane proton channel, linked together by a central stalk and a peripheral stalk. During catalysis, ATP synthesis in the catalytic domain of F(1) is coupled via a rotary mechanism of the central stalk subunits to proton translocation. In terms of biological role, component of the F(0) channel, it forms part of the peripheral stalk, linking F(1) to F(0). The protein is ATP synthase subunit b of Streptococcus pyogenes serotype M1.